The chain runs to 1254 residues: MASESAAMDILDSAEASLNVASTALVEKEKKVQPATDETTPEKKAKMEIDAEMKDLTNDIPNSRKSQEKDPDALEDAKDPEADSSIELLCSPTPAEATDVDAMASKTESDNSVELLESPLKSPSSNDVNDEELLPLEEKEKPGPAKELEPKESEPDSKESSKSEALADSSIELISSPTSDDSLAKEKEVEVKEEHGQQAEAQVLQEIPRKADDSFKLQDDIAMEEDVPVPRSKAMQESKETQKTSKTTTKLEPLVDSIKDAIEDCINCNCKRLKKQYVLACVAILNFYKVPRKLKRSQYVCLDCYDTAVEMYEEYAGLLLAKQPLLLREFKQEQADFVTLDSSDEEEDEKTPEKPEFSKNVLDLIENELEDAIKKTLNKVEFSNQFNWSKTILQAKIERLAKKFEEVDLQLAQVQGLADKMHCSVYNSCQVVHKQLPPLDLHQNICPSDYKRLQQLPAAGDIVRPPIKIGETYYAVKNKAIASWVSVSVMEICDTTTGGGVTVKAYKIKYQHMPYPMMKTVAAKHLAYFDPPTVRLPIGTRVIAFFDGTLVGGKEKGVVQSAFYPGIIAEPLKQNNRFRYLIFYDDGYTQYVHHSDVRLVCQASEKVWEDVHPASRDFIQKYVERYAVDRPMVQCTKGQSMNTESNGTWLYARVIEVDCSLVLMQFEADKNHTEWIYRGSLRLAPVFKETQNSLNADCAIHQMRVPRRTEPFIRYTKEMESSNMQVDQQIRAIARKSTSKSGSPASTAAPPTGSSSSSAVRHLNNSTIYVDDDTRPKGQVVHFTAKRNMPPKIFKSHKCNPGCPFPMMHRLDSYSPLSKPLLSGWERMFMKQKTKRTVVYRGPCGRNLRNMAEVHNYLRLTNNVLNVDNFDFTPDLRCLAEYYIESTIVKEADISKGQEKMAIPLVNYYDNTLPPPCEYAKQRIPTEGVNLNLDEEFLVCCDCEDDCSDKESCACWQLTVTGVRYCNPKKPIEEIGYQYKRLHEGVLTGIYECNSRCKCKKNCLNRVVQHSLEMKLQVFKTSNRGWGLRCVNDIPKGAFVCIYAGHLLTEAKANEGGQDAGDEYFADLDYIEVAEQLKEGYESDVERADLDHEDDNYGPDAEDDDDFRPNNYYQKKKEKLRSSRSNSSSTQNTELDSQERTVISFNPNTDLDETVRENSVRRFFGKDQTPFIMDAKTTGNLGRYFNHSCSPNLFVQNVFVDTHDLRFPWVGFFASSHIRSGTELTWNYNYEVGVVPNKVLYCQCGAQNCRVRLL.

Disordered stretches follow at residues 24 to 209 (ALVE…EIPR) and 228 to 248 (PVPR…SKTT). Composition is skewed to basic and acidic residues over residues 40 to 57 (TPEK…KDLT) and 65 to 81 (KSQE…KDPE). Over residues 112–125 (SVELLESPLKSPSS) the composition is skewed to low complexity. Positions 136-162 (LEEKEKPGPAKELEPKESEPDSKESSK) are enriched in basic and acidic residues. Positions 172–181 (ELISSPTSDD) are enriched in polar residues. 2 stretches are compositionally biased toward basic and acidic residues: residues 182–197 (SLAK…EHGQ) and 234–243 (AMQESKETQK). A coiled-coil region spans residues 391 to 416 (TILQAKIERLAKKFEEVDLQLAQVQG). 2 consecutive Tudor domains span residues 535–607 (RLPI…SEKV) and 634–691 (QCTK…KETQ). The disordered stretch occupies residues 734 to 760 (ARKSTSKSGSPASTAAPPTGSSSSSAV). Over residues 739 to 759 (SKSGSPASTAAPPTGSSSSSA) the composition is skewed to low complexity. One can recognise an MBD domain in the interval 811 to 877 (LDSYSPLSKP…DNFDFTPDLR (67 aa)). A Pre-SET domain is found at 939 to 1011 (VCCDCEDDCS…NCLNRVVQHS (73 aa)). Positions 941, 943, 947, 953, 955, 993, 997, 999, and 1003 each coordinate Zn(2+). The region spanning 1014 to 1229 (MKLQVFKTSN…SGTELTWNYN (216 aa)) is the SET domain. Residues 1024-1026 (RGW), aspartate 1062, and tyrosine 1064 contribute to the S-adenosyl-L-methionine site. The span at 1081–1090 (YESDVERADL) shows a compositional bias: basic and acidic residues. The segment at 1081 to 1139 (YESDVERADLDHEDDNYGPDAEDDDDFRPNNYYQKKKEKLRSSRSNSSSTQNTELDSQE) is disordered. Acidic residues predominate over residues 1091 to 1106 (DHEDDNYGPDAEDDDD). A compositionally biased stretch (low complexity) spans 1123–1134 (SRSNSSSTQNTE). Residues arginine 1183 and 1186 to 1187 (NH) contribute to the S-adenosyl-L-methionine site. Zn(2+)-binding residues include cysteine 1189, cysteine 1242, cysteine 1244, and cysteine 1249. Residues 1238-1254 (KVLYCQCGAQNCRVRLL) enclose the Post-SET domain.

It belongs to the class V-like SAM-binding methyltransferase superfamily. Histone-lysine methyltransferase family. Suvar3-9 subfamily.

It localises to the nucleus. It is found in the chromosome. It carries out the reaction L-lysyl(9)-[histone H3] + 3 S-adenosyl-L-methionine = N(6),N(6),N(6)-trimethyl-L-lysyl(9)-[histone H3] + 3 S-adenosyl-L-homocysteine + 3 H(+). In terms of biological role, histone methyltransferase that specifically trimethylates 'Lys-9' of histone H3 in ovary. H3 'Lys-9' trimethylation represents a specific tag for epigenetic transcriptional repression by recruiting Su(var)205/HP1 to methylated histones. Plays a central role during oogenesis. The sequence is that of Histone-lysine N-methyltransferase eggless (egg) from Drosophila pseudoobscura pseudoobscura (Fruit fly).